A 159-amino-acid chain; its full sequence is Biogenesis of lysosome-related organelles complex 1 subunit 2 (159 aa).

Positions 1–37 (MDKPTTSAAAAAAQDSNLLPDSPQHGPTLSSASSFEA) are disordered. Positions 14-36 (QDSNLLPDSPQHGPTLSSASSFE) are enriched in polar residues. Positions 69 to 134 (EDYKLLEEMN…KLEAAAYKLD (66 aa)) form a coiled coil.

Belongs to the BLOC1S2 family. As to quaternary structure, homodimer. Component of the biogenesis of lysosome-related organelles complex-1 (BLOC-1) composed of Blos1, Blos2, Blos3, Blos4, Dysb, Muted, Pldn and Snapin. Interacts with Snapin.

Functionally, component of the biogenesis of lysosome-related organelles complex-1 (BLOC-1) involved in pigment granule biogenesis. This Drosophila melanogaster (Fruit fly) protein is Biogenesis of lysosome-related organelles complex 1 subunit 2.